Consider the following 211-residue polypeptide: Endonuclease III (211 aa).

Positions 108–127 (RAALEALPGVGRKTANVVLN) constitute a HhH domain. [4Fe-4S] cluster-binding residues include C187, C194, C197, and C203.

It belongs to the Nth/MutY family. The cofactor is [4Fe-4S] cluster.

The catalysed reaction is 2'-deoxyribonucleotide-(2'-deoxyribose 5'-phosphate)-2'-deoxyribonucleotide-DNA = a 3'-end 2'-deoxyribonucleotide-(2,3-dehydro-2,3-deoxyribose 5'-phosphate)-DNA + a 5'-end 5'-phospho-2'-deoxyribonucleoside-DNA + H(+). In terms of biological role, DNA repair enzyme that has both DNA N-glycosylase activity and AP-lyase activity. The DNA N-glycosylase activity releases various damaged pyrimidines from DNA by cleaving the N-glycosidic bond, leaving an AP (apurinic/apyrimidinic) site. The AP-lyase activity cleaves the phosphodiester bond 3' to the AP site by a beta-elimination, leaving a 3'-terminal unsaturated sugar and a product with a terminal 5'-phosphate. This Escherichia coli O6:H1 (strain CFT073 / ATCC 700928 / UPEC) protein is Endonuclease III.